A 1657-amino-acid polypeptide reads, in one-letter code: Alsin (1657 aa).

3 RCC1 repeats span residues 59 to 108 (DGEV…AVTD), 109 to 167 (NGVA…ALSI), and 169 to 218 (REIW…ALVQ). The tract at residues 432–480 (TGAQAGSSAIGPEGLKDSREEQVKQESMQGKKSSSLVDIREEETEGGSR) is disordered. Residues 445-455 (GLKDSREEQVK) show a composition bias toward basic and acidic residues. A compositionally biased stretch (polar residues) spans 456–467 (QESMQGKKSSSL). 4 positions are modified to phosphoserine: Ser-465, Ser-466, Ser-483, and Ser-492. Residue Thr-510 is modified to Phosphothreonine. RCC1 repeat units follow at residues 525 to 576 (RTEV…ALTA) and 578 to 627 (SQVY…FLVD). The residue at position 533 (Lys-533) is an N6-acetyllysine. The 196-residue stretch at 690 to 885 (GYIASLHELA…ECLALHLGRK (196 aa)) folds into the DH domain. The region spanning 901 to 1007 (GKMTDSLRKP…RAISQAVDQA (107 aa)) is the PH domain. 8 MORN repeats span residues 1049–1071 (YDGR…DGKM), 1072–1094 (YSGM…NKAM), 1100–1122 (YVGH…SGEV), 1123–1145 (FEGC…KLTS), 1151–1173 (FIGQ…TRGE), 1175–1197 (YMGM…FGLY), 1198–1220 (YEGN…DDTI), and 1221–1244 (YEGE…NGDY). Phosphoserine is present on Ser-1335. The region spanning 1513–1657 (KQPDIALLGF…YYQIQREKLN (145 aa)) is the VPS9 domain.

As to quaternary structure, forms a heteromeric complex with ALS2CL. Interacts with ALS2CL.

May act as a GTPase regulator. Controls survival and growth of spinal motoneurons. This is Alsin (ALS2) from Homo sapiens (Human).